A 78-amino-acid polypeptide reads, in one-letter code: Large ribosomal subunit protein bL28 (78 aa).

This sequence belongs to the bacterial ribosomal protein bL28 family.

In Acidithiobacillus ferrooxidans (strain ATCC 23270 / DSM 14882 / CIP 104768 / NCIMB 8455) (Ferrobacillus ferrooxidans (strain ATCC 23270)), this protein is Large ribosomal subunit protein bL28.